The chain runs to 204 residues: Elongation factor Ts (204 aa).

The segment at 80-83 (TDFV) is involved in Mg(2+) ion dislocation from EF-Tu.

This sequence belongs to the EF-Ts family.

It localises to the cytoplasm. Functionally, associates with the EF-Tu.GDP complex and induces the exchange of GDP to GTP. It remains bound to the aminoacyl-tRNA.EF-Tu.GTP complex up to the GTP hydrolysis stage on the ribosome. This Thermoanaerobacter sp. (strain X514) protein is Elongation factor Ts.